Reading from the N-terminus, the 1477-residue chain is Neuralized-like protein 4 (1477 aa).

Disordered regions lie at residues 1–26 (MAEL…RKQP) and 168–196 (QPPP…RPDK). Residues 1–167 (MAELHPRTGK…KCTQITVLSC (167 aa)) enclose the NHR 1 domain. The segment covering 171–183 (PEEEEEEDAEEQE) has biased composition (acidic residues). 4 NHR domains span residues 250 to 417 (ALLF…IVHN), 450 to 616 (QLLF…IMDE), 645 to 813 (DLRF…LTGG), and 841 to 1010 (SHRF…TVSS). The tract at residues 1012 to 1041 (LLEEPDATKPPSITSESEEEEDPADHGDPH) is disordered. Positions 1048-1211 (SLQFLANHGK…QCEQVSIVTG (164 aa)) constitute an NHR 6 domain.

In terms of processing, ubiquitinated. This ubiquitination leads to proteasomal degradation.

The protein localises to the cytoplasm. It localises to the cytoskeleton. The protein resides in the microtubule organizing center. Its subcellular location is the centrosome. It is found in the centriole. Promotes CCP110 ubiquitination and proteasome-dependent degradation. By counteracting accumulation of CP110, maintains normal centriolar homeostasis and preventing formation of ectopic microtubular organizing centers. The sequence is that of Neuralized-like protein 4 (neurl4) from Xenopus tropicalis (Western clawed frog).